The chain runs to 862 residues: Chaperone protein ClpB 1 (862 aa).

A Clp R domain is found at 5 to 147 (AEQFTEQAWA…KEAITAVRGN (143 aa)). 2 repeat regions span residues 8–72 (FTEQ…LQRL) and 84–147 (LGRS…VRGN). Positions 160 to 341 (ESLAKYGRDL…RRFQQVLVDQ (182 aa)) are NBD1. Position 207-214 (207-214 (GEPGVGKT)) interacts with ATP. The linker stretch occupies residues 342-550 (PTVPDTISIL…IAEVIAKWTG (209 aa)). Residues 392 to 526 (IDLVDESAAR…QEDLLEDEDG (135 aa)) are a coiled coil. Residues 560 to 771 (EMEKLLQLED…RLDDQIIFRS (212 aa)) are NBD2. Position 610–617 (610–617 (GPTGVGKT)) interacts with ATP. The tract at residues 772-862 (LEKEELRRIV…DAGDDKLSIS (91 aa)) is C-terminal.

The protein belongs to the ClpA/ClpB family. In terms of assembly, homohexamer. The oligomerization is ATP-dependent.

It localises to the cytoplasm. In terms of biological role, part of a stress-induced multi-chaperone system, it is involved in the recovery of the cell from heat-induced damage, in cooperation with DnaK, DnaJ and GrpE. Acts before DnaK, in the processing of protein aggregates. Protein binding stimulates the ATPase activity; ATP hydrolysis unfolds the denatured protein aggregates, which probably helps expose new hydrophobic binding sites on the surface of ClpB-bound aggregates, contributing to the solubilization and refolding of denatured protein aggregates by DnaK. This is Chaperone protein ClpB 1 (clpB1) from Parasynechococcus marenigrum (strain WH8102).